The primary structure comprises 679 residues: Methionine--tRNA ligase (679 aa).

The short motif at 14 to 24 (PYANGSIHLGH) is the 'HIGH' region element. The Zn(2+) site is built by Cys-145, Cys-148, Cys-158, and Cys-161. A 'KMSKS' region motif is present at residues 331-335 (KMSKS). Lys-334 provides a ligand contact to ATP. In terms of domain architecture, tRNA-binding spans 577–679 (TFAAVDLRIA…NGAKPGQRVM (103 aa)).

This sequence belongs to the class-I aminoacyl-tRNA synthetase family. MetG type 1 subfamily. As to quaternary structure, homodimer. The cofactor is Zn(2+).

It is found in the cytoplasm. The enzyme catalyses tRNA(Met) + L-methionine + ATP = L-methionyl-tRNA(Met) + AMP + diphosphate. Its function is as follows. Is required not only for elongation of protein synthesis but also for the initiation of all mRNA translation through initiator tRNA(fMet) aminoacylation. The chain is Methionine--tRNA ligase from Stutzerimonas stutzeri (strain A1501) (Pseudomonas stutzeri).